The chain runs to 729 residues: MSKSVVIAEKPSVARDIARVLKCDKKGNGYLEGSKYIVTWALGHLVTLADPESYDVKYKKWNLEDLPMLPERLKLTVIKQTGKQFNAVKSQLLRKDVNEIIVATDAGREGELVARWIIDKVKLNKPIKRLWISSVTDKAIKDGFANLKPGKAYDNLYASAVARSEADWYIGLNATRALTTRFNAQLNCGRVQTPTVAMIASREDEIKNFKAQTYYGIEAQTMEKLKLTWQDANGNSRSFNKEKIDGIVKRLDKQNATVVEIDKKQKKSFSPGLYDLTELQRDANKKFGYSAKETLNIMQKLYEQHKVLTYPRTDSRYISSDIVGTLPERLKACGVGEYRPFAHKVLQKPIKPNKSFVDDSKVSDHHAIIPTEGYVNFSAFTDKERKIYDLVVKRFLAVLFPAFEYEQLTLRTKVGNETFIARGKTILHAGWKEVYENRFEDDDVTDDVKEQLLPHIEKGDTLAVKLIMQTSGQTKAPARFNEATLLSAMENPTKYMDTQNKQLADTLKSTGGLGTVATRADIIDKLFNSFLIEKRGKDIHITSKGRQLLDLVPEELKSPTLTGEWEQKLEAIAKGKLKKEVFISEMKNYTKEIVSEIKSSDKKYKHDNISTKSCPDCGKPMLEVNGKKGKMLVCQDRECGHRKNVSRTTNARCPQCKKKLELRGEGAGQIFACKCGYREKLSTFQERRKKESGNKADKRDVQKYMKQQNKEEEPLNNPFAEALKKLKFD.

Positions 3 to 136 (KSVVIAEKPS…IKRLWISSVT (134 aa)) constitute a Toprim domain. Glutamate 9 and aspartate 105 together coordinate Mg(2+). The region spanning 153–594 (YDNLYASAVA…EMKNYTKEIV (442 aa)) is the Topo IA-type catalytic domain. The interaction with DNA stretch occupies residues 187-192 (NCGRVQ). Tyrosine 310 functions as the O-(5'-phospho-DNA)-tyrosine intermediate in the catalytic mechanism. Basic and acidic residues predominate over residues 686 to 713 (ERRKKESGNKADKRDVQKYMKQQNKEEE). Positions 686 to 719 (ERRKKESGNKADKRDVQKYMKQQNKEEEPLNNPF) are disordered.

It belongs to the type IA topoisomerase family. Mg(2+) serves as cofactor.

The enzyme catalyses ATP-independent breakage of single-stranded DNA, followed by passage and rejoining.. Functionally, releases the supercoiling and torsional tension of DNA, which is introduced during the DNA replication and transcription, by transiently cleaving and rejoining one strand of the DNA duplex. Introduces a single-strand break via transesterification at a target site in duplex DNA. The scissile phosphodiester is attacked by the catalytic tyrosine of the enzyme, resulting in the formation of a DNA-(5'-phosphotyrosyl)-enzyme intermediate and the expulsion of a 3'-OH DNA strand. The free DNA strand then undergoes passage around the unbroken strand, thus removing DNA supercoils. Finally, in the religation step, the DNA 3'-OH attacks the covalent intermediate to expel the active-site tyrosine and restore the DNA phosphodiester backbone. This chain is DNA topoisomerase 3, found in Bacillus cereus (strain ATCC 14579 / DSM 31 / CCUG 7414 / JCM 2152 / NBRC 15305 / NCIMB 9373 / NCTC 2599 / NRRL B-3711).